The sequence spans 103 residues: uncharacterized protein (103 aa).

2 helical membrane-spanning segments follow: residues 13–33 (LLPF…YCIL) and 77–97 (FSIY…PYLF).

The protein localises to the endoplasmic reticulum membrane. This is an uncharacterized protein from Schizosaccharomyces pombe (strain 972 / ATCC 24843) (Fission yeast).